A 539-amino-acid chain; its full sequence is Phosphoenolpyruvate carboxykinase (ATP) (539 aa).

Arg61, Tyr195, and Lys201 together coordinate substrate. ATP contacts are provided by residues Lys201, His220, and 238 to 246 (GLSGTGKTT). Positions 201 and 220 each coordinate Mn(2+). A Mn(2+)-binding site is contributed by Asp259. ATP contacts are provided by Glu287, Arg325, and Thr450. Arg325 serves as a coordination point for substrate.

This sequence belongs to the phosphoenolpyruvate carboxykinase (ATP) family. It depends on Mn(2+) as a cofactor.

Its subcellular location is the cytoplasm. It catalyses the reaction oxaloacetate + ATP = phosphoenolpyruvate + ADP + CO2. The protein operates within carbohydrate biosynthesis; gluconeogenesis. In terms of biological role, involved in the gluconeogenesis. Catalyzes the conversion of oxaloacetate (OAA) to phosphoenolpyruvate (PEP) through direct phosphoryl transfer between the nucleoside triphosphate and OAA. In Methylorubrum extorquens (strain CM4 / NCIMB 13688) (Methylobacterium extorquens), this protein is Phosphoenolpyruvate carboxykinase (ATP).